The following is a 165-amino-acid chain: Thiol peroxidase (165 aa).

A Thioredoxin domain is found at 18 to 165; the sequence is PQVGDVVTDF…PNYDAALAVL (148 aa). The active-site Cysteine sulfenic acid (-SOH) intermediate is Cys-60. Residues Cys-60 and Cys-94 are joined by a disulfide bond.

The protein belongs to the peroxiredoxin family. Tpx subfamily. Homodimer.

It catalyses the reaction a hydroperoxide + [thioredoxin]-dithiol = an alcohol + [thioredoxin]-disulfide + H2O. Functionally, thiol-specific peroxidase that catalyzes the reduction of hydrogen peroxide and organic hydroperoxides to water and alcohols, respectively. Plays a role in cell protection against oxidative stress by detoxifying peroxides. This Pasteurella multocida (strain Pm70) protein is Thiol peroxidase.